We begin with the raw amino-acid sequence, 275 residues long: NAD kinase (275 aa).

The Proton acceptor role is filled by Asp66. NAD(+) contacts are provided by residues 66-67 (DG), His71, 135-136 (NE), Lys146, Arg163, Asp165, and 176-181 (TAYAMS).

This sequence belongs to the NAD kinase family. A divalent metal cation is required as a cofactor.

Its subcellular location is the cytoplasm. It catalyses the reaction NAD(+) + ATP = ADP + NADP(+) + H(+). Its function is as follows. Involved in the regulation of the intracellular balance of NAD and NADP, and is a key enzyme in the biosynthesis of NADP. Catalyzes specifically the phosphorylation on 2'-hydroxyl of the adenosine moiety of NAD to yield NADP. The sequence is that of NAD kinase from Methanosphaera stadtmanae (strain ATCC 43021 / DSM 3091 / JCM 11832 / MCB-3).